Here is a 457-residue protein sequence, read N- to C-terminus: MALSEDTIKAVEATAGLIAAQGIEFTRAFYERMLTKNEELKDVFNLAHQRTLRQPKALLDSLVAYALSIRRINELYELKGKDLPWTGHLAELQGFFSVAERVANKHTSVGIQPAQYQIVGAHLLATIEDRVTKDRAVLAAWGKAYEFLADLLIKREEEIYAETEGSEGGWRQTRTFRVEEKARVNEVICRFRLVPAKGGASVVQHKPGQYLAIFVRNPELFQHQQIRQYSIMSAPNSAYYEIAVHKDGAGTVSRYLHDHVDTGDLLEVAPPYGDFFLRYLEAGEQAAADTQASSEFQVLQGRAVNFAAEKTAPIVLISGGIGQTPLLSMLRFLAQKEGRETARPIFWIHAAHDSRVRAFKEEVDAIREAALPSLRVVTFLSEVRATDREGEDYDFAGRINLDRIPELARLEAGHANPHYFFVGPTGFMTAVEEQLRARSVPDDRIHFEMFGPFKASH.

The region spanning 2–157 (ALSEDTIKAV…LADLLIKREE (156 aa)) is the Globin domain. His106 is a binding site for heme b. Active-site charge relay system residues include Tyr116 and Glu156. The reductase stretch occupies residues 168–456 (GGWRQTRTFR…FEMFGPFKAS (289 aa)). The region spanning 171 to 278 (RQTRTFRVEE…APPYGDFFLR (108 aa)) is the FAD-binding FR-type domain. FAD contacts are provided by residues Tyr210 and 227–230 (RQYS). 320 to 325 (GIGQTP) is an NADP(+) binding site. An FAD-binding site is contributed by 449–452 (MFGP).

The protein belongs to the globin family. Two-domain flavohemoproteins subfamily. It in the C-terminal section; belongs to the flavoprotein pyridine nucleotide cytochrome reductase family. In terms of assembly, monomer. Heme b serves as cofactor. Requires FAD as cofactor.

It carries out the reaction 2 nitric oxide + NADPH + 2 O2 = 2 nitrate + NADP(+) + H(+). The enzyme catalyses 2 nitric oxide + NADH + 2 O2 = 2 nitrate + NAD(+) + H(+). Functionally, flavohemoprotein involved in nitric oxide (NO) detoxification in an aerobic process, termed nitric oxide dioxygenase (NOD) reaction that utilizes O(2) and NAD(P)H to convert NO to nitrate, which protects the protozoan parasite from various noxious nitrogen compounds. Therefore, plays a central role in the inducible response to nitrosative stress. May also be involved in O(2) detoxification. The chain is Flavohemoprotein-1 (hmpA-1) from Giardia intestinalis (strain P15) (Giardia lamblia).